Here is a 129-residue protein sequence, read N- to C-terminus: Lysozyme C, milk isozyme (129 aa).

Residues 1-129 (KIFSKCELAR…LSKYLASCNL (129 aa)) enclose the C-type lysozyme domain. 4 disulfides stabilise this stretch: C6–C127, C30–C115, C65–C80, and C76–C94. Residues E35 and D53 contribute to the active site. Residues K82, D85, N87, D90, and D91 each contribute to the Ca(2+) site.

This sequence belongs to the glycosyl hydrolase 22 family. Monomer. It depends on Ca(2+) as a cofactor.

It catalyses the reaction Hydrolysis of (1-&gt;4)-beta-linkages between N-acetylmuramic acid and N-acetyl-D-glucosamine residues in a peptidoglycan and between N-acetyl-D-glucosamine residues in chitodextrins.. Functionally, lysozymes have primarily a bacteriolytic function; those in tissues and body fluids are associated with the monocyte-macrophage system and enhance the activity of immunoagents. The polypeptide is Lysozyme C, milk isozyme (Canis lupus familiaris (Dog)).